The primary structure comprises 186 residues: Ribosome-recycling factor (186 aa).

Belongs to the RRF family.

Its subcellular location is the cytoplasm. Responsible for the release of ribosomes from messenger RNA at the termination of protein biosynthesis. May increase the efficiency of translation by recycling ribosomes from one round of translation to another. The sequence is that of Ribosome-recycling factor from Polaromonas naphthalenivorans (strain CJ2).